Here is a 365-residue protein sequence, read N- to C-terminus: Probable galacturonosyltransferase-like 10 (365 aa).

Residues 1-10 lie on the Cytoplasmic side of the membrane; it reads MMSGSRLASR. The chain crosses the membrane as a helical; Signal-anchor for type II membrane protein span at residues 11 to 31; the sequence is LIIIFSIISTSFFTVESIRLF. Over 32–365 the chain is Lumenal; it reads PDSFDDASSD…LQYNQELEIL (334 aa). N-linked (GlcNAc...) asparagine glycosylation occurs at Asn209.

Belongs to the glycosyltransferase 8 family.

The protein localises to the golgi apparatus membrane. Its pathway is glycan metabolism; pectin biosynthesis. In terms of biological role, may be involved in pectin and/or xylans biosynthesis in cell walls. The polypeptide is Probable galacturonosyltransferase-like 10 (GATL10) (Arabidopsis thaliana (Mouse-ear cress)).